A 473-amino-acid chain; its full sequence is MASAKEDNKHQGVGIVGAGLVGCLTALAFAAKGFSVTLFELRPDPKKVTNEKNLRSINLAVSDRGIRTLKYVDSEMADRVLEHVIPMTGRMIHDLSGTKQESQAYGLFGESINSIDRSFLNDYLLDEIRHSDINVHFNHKLIRLDDLSSEEKSPKLTFLDTSESNESTMKSYEFDYVIGADGAHSQFRYQLQKSMRMNISQEYIDMQYLELSIPPNTTGDSKFHIDPNHLHIWPRHEFMLIALANEDGSFTSTFFSPWSVIESFGTSSDKFIDFFKYNFPDAFKLMGEKKLRYAFENQPRGSLMQVNAYPYHNPNGRALIIGDAAHSMVPFYGQGMNCGFEDIRVLMELIDKNNGEVSESFRQYSVLRAEDLQTISKLALDNYHEMSSKVTNVWYLFRKKIDNMLGRYGNGLFQWIPMYTMISFRGDIPYSKAIKIEKRQTKILNAIEVGTLTGFILFGAAKLAQHYHKLSNK.

It belongs to the aromatic-ring hydroxylase family. KMO subfamily. It depends on FAD as a cofactor.

It localises to the mitochondrion outer membrane. It carries out the reaction L-kynurenine + NADPH + O2 + H(+) = 3-hydroxy-L-kynurenine + NADP(+) + H2O. It functions in the pathway cofactor biosynthesis; NAD(+) biosynthesis; quinolinate from L-kynurenine: step 1/3. Catalyzes the hydroxylation of L-kynurenine (L-Kyn) to form 3-hydroxy-L-kynurenine (L-3OHKyn). Required for synthesis of quinolinic acid. This Debaryomyces hansenii (strain ATCC 36239 / CBS 767 / BCRC 21394 / JCM 1990 / NBRC 0083 / IGC 2968) (Yeast) protein is Kynurenine 3-monooxygenase.